Here is a 351-residue protein sequence, read N- to C-terminus: Riboflavin-binding protein RibY (351 aa).

Residues 1–19 (MMKLRVLTLGILIILLITA) form the signal peptide. The N-palmitoyl cysteine moiety is linked to residue Cys-20. Cys-20 is lipidated: S-diacylglycerol cysteine.

It belongs to the NMT1 family. As to quaternary structure, the complex is likely composed of an ATP-binding protein, a transmembrane protein (RibX) and a solute-binding protein (RibY).

Its subcellular location is the cell membrane. Functionally, part of an ABC transporter complex that transports riboflavin into the cell. Binds riboflavin. This chain is Riboflavin-binding protein RibY, found in Chloroflexus aurantiacus (strain ATCC 29366 / DSM 635 / J-10-fl).